A 229-amino-acid chain; its full sequence is MTPKRERAVVCLSGGMDSCVCAAIAARDYEPYAIHFSYGQRTEARELVSARSVAERLGFKDLLHLKIDLFRRIGGSALTDTSIDVPKAPAEEAAIGAEIPVTYVPFRNAHFLAAAVSWAEVLGASKIVIGAVEQDSSGYPDCRPAYYEAFQHLIETGTKEGSIRVETPLIQLRKREIVRLGLELGAPLDLTWSCYSGAEEACGECESCVLRLRAFEEADAVDPIPYAHR.

12–22 (LSGGMDSCVCA) contacts ATP. Zn(2+)-binding residues include C194, C202, C205, and C208.

This sequence belongs to the QueC family. Requires Zn(2+) as cofactor.

It carries out the reaction 7-carboxy-7-deazaguanine + NH4(+) + ATP = 7-cyano-7-deazaguanine + ADP + phosphate + H2O + H(+). Its pathway is purine metabolism; 7-cyano-7-deazaguanine biosynthesis. Functionally, catalyzes the ATP-dependent conversion of 7-carboxy-7-deazaguanine (CDG) to 7-cyano-7-deazaguanine (preQ(0)). This is 7-cyano-7-deazaguanine synthase from Acidobacterium capsulatum (strain ATCC 51196 / DSM 11244 / BCRC 80197 / JCM 7670 / NBRC 15755 / NCIMB 13165 / 161).